A 121-amino-acid chain; its full sequence is Acidic phospholipase A2 SpII RP4 (121 aa).

7 cysteine pairs are disulfide-bonded: Cys-25–Cys-114, Cys-27–Cys-43, Cys-42–Cys-94, Cys-48–Cys-121, Cys-49–Cys-87, Cys-56–Cys-80, and Cys-74–Cys-85. Ca(2+) contacts are provided by Tyr-26, Gly-28, and Gly-30. His-46 is a catalytic residue. Residue Asp-47 coordinates Ca(2+). The active site involves Asp-88.

It depends on Ca(2+) as a cofactor. Expressed by the venom gland.

Its subcellular location is the secreted. It catalyses the reaction a 1,2-diacyl-sn-glycero-3-phosphocholine + H2O = a 1-acyl-sn-glycero-3-phosphocholine + a fatty acid + H(+). Snake venom phospholipase A2 (PLA2) which exhibits indirect hemolysis, induces mild edema inflammation in the foot pads of mice and slightly delays anticoagulant activities. In mice, not lethal, even at the highest dose, and exhibits low to moderate myotoxicity on muscular fibers. PLA2 catalyzes the calcium-dependent hydrolysis of the 2-acyl groups in 3-sn-phosphoglycerides. The protein is Acidic phospholipase A2 SpII RP4 of Bothrops alternatus (Urutu).